The primary structure comprises 182 residues: UPF0423 protein BRA0381/BS1330_II0378 (182 aa).

The first 24 residues, Met1–Ala24, serve as a signal peptide directing secretion.

The protein belongs to the UPF0423 family.

The protein is UPF0423 protein BRA0381/BS1330_II0378 of Brucella suis biovar 1 (strain 1330).